The primary structure comprises 295 residues: Secreted frizzled-related protein 2 (295 aa).

The first 24 residues, Met1–Gly24, serve as a signal peptide directing secretion. Residues Tyr35–Leu155 enclose the FZ domain. 8 disulfides stabilise this stretch: Cys40/Cys103, Cys50/Cys96, Cys87/Cys125, Cys114/Cys152, Cys118/Cys142, Cys172/Cys245, Cys175/Cys247, and Cys190/Cys295. An NTR domain is found at Cys172–Cys295.

It belongs to the secreted frizzled-related protein (sFRP) family. Highly expressed in the eye. Weaker expression in heart and lung.

Its subcellular location is the secreted. Soluble frizzled-related proteins (sFRPS) function as modulators of Wnt signaling through direct interaction with Wnts. They have a role in regulating cell growth and differentiation in specific cell types. SFRP2 may be important for eye retinal development and for myogenesis. This chain is Secreted frizzled-related protein 2, found in Mus musculus (Mouse).